A 556-amino-acid polypeptide reads, in one-letter code: (-)-alpha-pinene synthase (556 aa).

Residues Asp309, Asp313, Asp453, and Glu461 each contribute to the Mg(2+) site. A DDXXD motif motif is present at residues 309–313; that stretch reads DDMYD.

Belongs to the terpene synthase family. Tpsa subfamily. It depends on Mg(2+) as a cofactor. Mn(2+) serves as cofactor. In terms of tissue distribution, expressed in ripe fruits and roots. Not detected in vegetative tissues.

The protein resides in the cytoplasm. Its subcellular location is the cytosol. The enzyme catalyses (2E)-geranyl diphosphate = (1S,5S)-alpha-pinene + diphosphate. The protein operates within secondary metabolite biosynthesis; terpenoid biosynthesis. In terms of biological role, monoterpene synthase catalyzing the production of (-)-alpha-pinene, beta-phellandrene and beta-myrcene as the major products. Unable to use farnesyl diphosphate as substrate. Exclusively expressed in the fruit of wild strawberries. Not detected in cultivated varieties. In Fragaria vesca (Woodland strawberry), this protein is (-)-alpha-pinene synthase.